A 565-amino-acid chain; its full sequence is NAD-dependent malic enzyme (565 aa).

Tyr104 serves as the catalytic Proton donor. Arg157 provides a ligand contact to NAD(+). The Proton acceptor role is filled by Lys175. Glu246, Asp247, and Asp270 together coordinate a divalent metal cation. Positions 270 and 418 each coordinate NAD(+).

This sequence belongs to the malic enzymes family. As to quaternary structure, homotetramer. Requires Mg(2+) as cofactor. The cofactor is Mn(2+).

It carries out the reaction (S)-malate + NAD(+) = pyruvate + CO2 + NADH. It catalyses the reaction oxaloacetate + H(+) = pyruvate + CO2. The protein is NAD-dependent malic enzyme of Escherichia coli (strain SMS-3-5 / SECEC).